Reading from the N-terminus, the 264-residue chain is MESGFTSKDTYLSHFNPRDYLEKYYSFGSRHCAENEILRHLLKNLFKIFCLGAVKGELLIDIGSGPTIYQLLSACESFTEIIVSDYTDQNLWELQKWLKKEPGAFDWSPVVTYVCDLEGNRMKGPEKEEKLRRAIKQVLKCDVTQSQPLGGVSLPPADCLLSTLCLDAACPDLPAYRTALRNLGSLLKPGGFLVMVDALKSSYYMIGEQKFSSLPLGWETVRDAVEEAGYTIEQFEVISQNYSSTTSNNEGLFSLVGRKPGRSE.

Arg18 is subject to Citrulline; alternate. Positions 20, 25, 63, 69, 85, 87, and 90 each coordinate S-adenosyl-L-methionine. Citrulline; alternate is present on Arg132. Residues 142 to 143 and Thr163 contribute to the S-adenosyl-L-methionine site; that span reads DV. Citrulline; alternate is present on Arg181. Positions 197 and 213 each coordinate nicotinamide.

This sequence belongs to the class I-like SAM-binding methyltransferase superfamily. NNMT/PNMT/TEMT family. In terms of assembly, monomer. In terms of processing, deiminated by PADI1 and PADI2. As to expression, expressed in white adipose tissue and liver (at protein level).

It localises to the cytoplasm. The enzyme catalyses nicotinamide + S-adenosyl-L-methionine = 1-methylnicotinamide + S-adenosyl-L-homocysteine. The protein operates within cofactor metabolism. Its pathway is amino-acid degradation. Its activity is regulated as follows. Inhibited by 6-methoxynicotinamide (JBSNF-000088). Functionally, catalyzes the N-methylation of nicotinamide using the universal methyl donor S-adenosyl-L-methionine to form N1-methylnicotinamide and S-adenosyl-L-homocysteine, a predominant nicotinamide/vitamin B3 clearance pathway. Plays a central role in regulating cellular methylation potential, by consuming S-adenosyl-L-methionine and limiting its availability for other methyltransferases. Actively mediates genome-wide epigenetic and transcriptional changes through hypomethylation of repressive chromatin marks, such as H3K27me3. In a developmental context, contributes to low levels of the repressive histone marks that characterize pluripotent embryonic stem cell pre-implantation state. Acts as a metabolic regulator primarily on white adipose tissue energy expenditure as well as hepatic gluconeogenesis and cholesterol biosynthesis. In white adipocytes, regulates polyamine flux by consuming S-adenosyl-L-methionine which provides for propylamine group in polyamine biosynthesis, whereas by consuming nicotinamide controls NAD(+) levels through the salvage pathway. Via its product N1-methylnicotinamide regulates protein acetylation in hepatocytes, by repressing the ubiquitination and increasing the stability of SIRT1 deacetylase. Can also N-methylate other pyridines structurally related to nicotinamide and play a role in xenobiotic detoxification. The chain is Nicotinamide N-methyltransferase (Nnmt) from Mus musculus (Mouse).